The sequence spans 314 residues: Ribosomal RNA small subunit methyltransferase H (314 aa).

Residues 36–38 (GGH), D56, F81, D103, and Q110 contribute to the S-adenosyl-L-methionine site.

Belongs to the methyltransferase superfamily. RsmH family.

It localises to the cytoplasm. It carries out the reaction cytidine(1402) in 16S rRNA + S-adenosyl-L-methionine = N(4)-methylcytidine(1402) in 16S rRNA + S-adenosyl-L-homocysteine + H(+). Functionally, specifically methylates the N4 position of cytidine in position 1402 (C1402) of 16S rRNA. The polypeptide is Ribosomal RNA small subunit methyltransferase H (Shewanella sediminis (strain HAW-EB3)).